We begin with the raw amino-acid sequence, 126 residues long: MQATTQIKTPVVGKHVYGELYGVDEALLKDEERLRKIVIEAAHIAKMHLVEVNSWRFKGGDKEGVSVIALVLESHIAIHTWPVYNFATVDVYTCGEHSDPMTAFRYIVSQLSPKRFTVNYADRSFK.

Serine 74 serves as the catalytic Schiff-base intermediate with substrate; via pyruvic acid. Serine 74 carries the post-translational modification Pyruvic acid (Ser); by autocatalysis. The active-site Proton acceptor; for processing activity is histidine 79. Cysteine 94 (proton donor; for catalytic activity) is an active-site residue.

This sequence belongs to the prokaryotic AdoMetDC family. Type 1 subfamily. In terms of assembly, heterooctamer of four alpha and four beta chains arranged as a tetramer of alpha/beta heterodimers. Pyruvate serves as cofactor. In terms of processing, is synthesized initially as an inactive proenzyme. Formation of the active enzyme involves a self-maturation process in which the active site pyruvoyl group is generated from an internal serine residue via an autocatalytic post-translational modification. Two non-identical subunits are generated from the proenzyme in this reaction, and the pyruvate is formed at the N-terminus of the alpha chain, which is derived from the carboxyl end of the proenzyme. The post-translation cleavage follows an unusual pathway, termed non-hydrolytic serinolysis, in which the side chain hydroxyl group of the serine supplies its oxygen atom to form the C-terminus of the beta chain, while the remainder of the serine residue undergoes an oxidative deamination to produce ammonia and the pyruvoyl group blocking the N-terminus of the alpha chain.

The enzyme catalyses L-arginine + H(+) = agmatine + CO2. The protein operates within amine and polyamine biosynthesis; agmatine biosynthesis; agmatine from L-arginine: step 1/1. Specifically catalyzes the decarboxylation of L-arginine to agmatine. Has no S-adenosylmethionine decarboxylase (AdoMetDC) activity. The polypeptide is Arginine decarboxylase proenzyme (Pyrobaculum aerophilum (strain ATCC 51768 / DSM 7523 / JCM 9630 / CIP 104966 / NBRC 100827 / IM2)).